Reading from the N-terminus, the 286-residue chain is Aminoglycoside N(3)-acetyltransferase III (286 aa).

Belongs to the antibiotic N-acetyltransferase family.

The catalysed reaction is a 2-deoxystreptamine antibiotic + acetyl-CoA = an N(3)-acetyl-2-deoxystreptamine antibiotic + CoA + H(+). Functionally, resistance to antibiotics containing the 2-deoxy-streptamine ring including gentamicin, kanamycin, tobramycin, neomycin and apramycin. In Acinetobacter baumannii, this protein is Aminoglycoside N(3)-acetyltransferase III (aacC2).